Reading from the N-terminus, the 146-residue chain is Large ribosomal subunit protein uL11 (146 aa).

It belongs to the universal ribosomal protein uL11 family. In terms of assembly, part of the ribosomal stalk of the 50S ribosomal subunit. Interacts with L10 and the large rRNA to form the base of the stalk. L10 forms an elongated spine to which L12 dimers bind in a sequential fashion forming a multimeric L10(L12)X complex. Post-translationally, one or more lysine residues are methylated.

In terms of biological role, forms part of the ribosomal stalk which helps the ribosome interact with GTP-bound translation factors. In Salinibacter ruber (strain DSM 13855 / M31), this protein is Large ribosomal subunit protein uL11.